A 557-amino-acid polypeptide reads, in one-letter code: NADP-dependent malic enzyme (557 aa).

The active-site Proton donor is Y88. NADP(+) is bound at residue R141. The active-site Proton acceptor is K159. The a divalent metal cation site is built by E231, D232, and D255. D255 serves as a coordination point for NADP(+). S322 is subject to Phosphoserine. Residue N394 participates in NADP(+) binding.

Belongs to the malic enzymes family. As to quaternary structure, homotetramer. Mg(2+) is required as a cofactor. It depends on Mn(2+) as a cofactor.

The protein localises to the cytoplasm. The enzyme catalyses (S)-malate + NADP(+) = pyruvate + CO2 + NADPH. The catalysed reaction is oxaloacetate + H(+) = pyruvate + CO2. Catalyzes the oxidative decarboxylation of (S)-malate in the presence of NADP(+) and divalent metal ions, and decarboxylation of oxaloacetate. The chain is NADP-dependent malic enzyme (ME1) from Sus scrofa (Pig).